Consider the following 83-residue polypeptide: uncharacterized protein (83 aa).

Helical transmembrane passes span 5–22 (VLLS…VYSI), 32–49 (IIKI…FSPA), and 56–78 (IGTI…IFIA).

The protein localises to the cell membrane. This is an uncharacterized protein from Rickettsia prowazekii (strain Madrid E).